A 249-amino-acid polypeptide reads, in one-letter code: MADS-box transcription factor 7 (249 aa).

The region spanning 1 to 61 is the MADS-box domain; that stretch reads MGRGRVELKR…GKLYEFCSTQ (61 aa). The 91-residue stretch at 90 to 180 folds into the K-box domain; that stretch reads LKASRNEYLK…RRKLEESNHV (91 aa).

May interact with the K-box of MADS6. May interact with MADS13 and MADS18. As to expression, expressed in lodicules, stamens and carpels.

It is found in the nucleus. In terms of biological role, probable transcription factor. May be involved in the control of flowering time. This Oryza sativa subsp. japonica (Rice) protein is MADS-box transcription factor 7 (MADS7).